The primary structure comprises 707 residues: UvrABC system protein C (707 aa).

A GIY-YIG domain is found at 14 to 94 (AEPGCYLMKD…IKKHRPRFNV (81 aa)). The region spanning 206–241 (GELVERLRGRMAGAAEGLRFEEAARLRDQLQAVERS) is the UVR domain. A disordered region spans residues 655–707 (DAPPIAADEPSGAPAGAPGGGPAEASPEAVAAATEAEIDAALADEDASPEPAA). Low complexity-rich tracts occupy residues 660–670 (AADEPSGAPAG) and 677–689 (AEASPEAVAAATE). The span at 690–707 (AEIDAALADEDASPEPAA) shows a compositional bias: acidic residues.

This sequence belongs to the UvrC family. Interacts with UvrB in an incision complex.

Its subcellular location is the cytoplasm. Its function is as follows. The UvrABC repair system catalyzes the recognition and processing of DNA lesions. UvrC both incises the 5' and 3' sides of the lesion. The N-terminal half is responsible for the 3' incision and the C-terminal half is responsible for the 5' incision. This chain is UvrABC system protein C, found in Anaeromyxobacter dehalogenans (strain 2CP-1 / ATCC BAA-258).